The primary structure comprises 238 residues: Ribonuclease PH (238 aa).

Residues arginine 86 and 124–126 (GTR) contribute to the phosphate site.

Belongs to the RNase PH family. As to quaternary structure, homohexameric ring arranged as a trimer of dimers.

It carries out the reaction tRNA(n+1) + phosphate = tRNA(n) + a ribonucleoside 5'-diphosphate. Functionally, phosphorolytic 3'-5' exoribonuclease that plays an important role in tRNA 3'-end maturation. Removes nucleotide residues following the 3'-CCA terminus of tRNAs; can also add nucleotides to the ends of RNA molecules by using nucleoside diphosphates as substrates, but this may not be physiologically important. Probably plays a role in initiation of 16S rRNA degradation (leading to ribosome degradation) during starvation. The polypeptide is Ribonuclease PH (Caulobacter vibrioides (strain ATCC 19089 / CIP 103742 / CB 15) (Caulobacter crescentus)).